Reading from the N-terminus, the 143-residue chain is uncharacterized protein (143 aa).

An N-terminal signal peptide occupies residues 1-16; that stretch reads MSRNRLFLVAGSLAVA. Residues 114–134 form a helical membrane-spanning segment; sequence GAYVFLGPGFTPGSPSGGSGG.

The protein resides in the membrane. This is an uncharacterized protein from Mycobacterium tuberculosis (strain CDC 1551 / Oshkosh).